A 141-amino-acid chain; its full sequence is Terrelysin (141 aa).

Belongs to the aegerolysin family.

It is found in the cytoplasm. Functionally, hemolysins are potential virulence factors. Has hemolytic activity against sheep erythrocytes in vitro. This chain is Terrelysin, found in Aspergillus terreus (strain NIH 2624 / FGSC A1156).